A 431-amino-acid polypeptide reads, in one-letter code: Glutamate-1-semialdehyde 2,1-aminomutase (431 aa).

K265 bears the N6-(pyridoxal phosphate)lysine mark.

Belongs to the class-III pyridoxal-phosphate-dependent aminotransferase family. HemL subfamily. In terms of assembly, homodimer. Requires pyridoxal 5'-phosphate as cofactor.

It localises to the cytoplasm. It catalyses the reaction (S)-4-amino-5-oxopentanoate = 5-aminolevulinate. It functions in the pathway porphyrin-containing compound metabolism; protoporphyrin-IX biosynthesis; 5-aminolevulinate from L-glutamyl-tRNA(Glu): step 2/2. This is Glutamate-1-semialdehyde 2,1-aminomutase from Vibrio parahaemolyticus serotype O3:K6 (strain RIMD 2210633).